The primary structure comprises 963 residues: Protocadherin alpha-C1 (963 aa).

Positions 1 to 18 are cleaved as a signal peptide; it reads MVGCGVAVLCLWVSCGAA. Cadherin domains follow at residues 19-124, 125-233, 234-340, 349-445, and 446-555; these read AGQL…SPLF, PAGD…APVF, ERSV…APEL, VPED…TPNF, and PQPQ…YPVI. The Extracellular segment spans residues 19 to 683; that stretch reads AGQLEYSVPE…GGQLSAQNLY (665 aa). A glycan (N-linked (GlcNAc...) asparagine) is linked at asparagine 38. Residues asparagine 248 and asparagine 274 are each glycosylated (N-linked (GlcNAc...) asparagine). Asparagine 562 carries N-linked (GlcNAc...) asparagine glycosylation. A Cadherin 6 domain is found at 570–667; it reads VPRSARTGHL…NSVPQLLPDF (98 aa). The helical transmembrane segment at 684–704 threads the bilayer; that stretch reads LVIALACISFLFLGCLLFFVC. Topologically, residues 705 to 963 are cytoplasmic; the sequence is TKLHQSPGCC…GNSTTDNSDQ (259 aa). PXXP repeat units lie at residues 812–815, 845–848, 886–889, and 904–907; these read PRQP, PGGP, PGNP, and PGSP. Positions 812–907 are 4 X 4 AA repeats of P-X-X-P; sequence PRQPNPDWRY…PDKFIIPGSP (96 aa). A disordered region spans residues 844 to 963; sequence GPGGPDQQWP…GNSTTDNSDQ (120 aa). Over residues 922 to 936 the composition is skewed to basic and acidic residues; sequence DKSDFITFGKKEETK.

It localises to the cell membrane. Potential calcium-dependent cell-adhesion protein. May be involved in the establishment and maintenance of specific neuronal connections in the brain. This Homo sapiens (Human) protein is Protocadherin alpha-C1 (PCDHAC1).